A 341-amino-acid polypeptide reads, in one-letter code: B3 domain-containing transcription factor VRN1 (341 aa).

A DNA-binding region (TF-B3 1) is located at residues 5–98; it reads FFHKLIFSST…AFSVYIFNLS (94 aa). Residues 166 to 223 are disordered; sequence GPVKAEEPTPTPKIPKKRGRKKKNADPEEINSSAPRDDDPENRSKFYESASARKRTVT. Over residues 179–188 the composition is skewed to basic residues; it reads IPKKRGRKKK. Basic and acidic residues predominate over residues 200 to 211; sequence PRDDDPENRSKF. Residues 244–338 constitute a DNA-binding region (TF-B3 2); sequence FRVVLRPSYL…VLKVTAFRVN (95 aa).

Expressed in roots and at lower levels in aerial parts.

The protein localises to the nucleus. Essential protein. Involved in the regulation of vernalization. Acts as a transcriptional repressor of FLC, a major target of the vernalization pathway. Binds DNA in vitro in a non-sequence-specific manner. The sequence is that of B3 domain-containing transcription factor VRN1 from Arabidopsis thaliana (Mouse-ear cress).